Consider the following 210-residue polypeptide: Stress-response A/B barrel domain-containing protein DABB1 (210 aa).

Stress-response A/B barrel domains lie at 5–100 and 116–204; these read VEHV…AVDW and IGKI…VVEF.

Homodimer.

Its subcellular location is the cytoplasm. The protein resides in the cytosol. Its function is as follows. Involved in defense against fungal pathogens. Possesses antifungal activity against diverse pathogenic fungi. This chain is Stress-response A/B barrel domain-containing protein DABB1, found in Arabidopsis thaliana (Mouse-ear cress).